The chain runs to 54 residues: U-reduvitoxin-Pr7a (54 aa).

Residues 1–23 (MDFLRILLFVLACIMALFTSAIA) form the signal peptide. 3 disulfides stabilise this stretch: C26–C41, C33–C46, and C40–C53.

Belongs to the venom Ptu1-like knottin family. Expressed by the venom gland.

The protein localises to the secreted. Functionally, binds reversibly and blocks P/Q-type voltage-gated calcium channels (Cav). The polypeptide is U-reduvitoxin-Pr7a (Platymeris rhadamanthus (Red spot assassin bug)).